The sequence spans 370 residues: Chaperone protein DnaJ (370 aa).

The 65-residue stretch at 6–70 folds into the J domain; that stretch reads DFYEILGVSK…QKRANYDQFG (65 aa). The segment at 134–216 adopts a CR-type zinc-finger fold; sequence GANKSVTLNV…CHGKGFNTKR (83 aa). Zn(2+) contacts are provided by Cys147, Cys150, Cys164, Cys167, Cys190, Cys193, Cys204, and Cys207. 4 CXXCXGXG motif repeats span residues 147–154, 164–171, 190–197, and 204–211; these read CTSCHGSG, CSRCGGTG, CPDCGGSG, and CGECHGKG.

Belongs to the DnaJ family. In terms of assembly, homodimer. Requires Zn(2+) as cofactor.

The protein resides in the cytoplasm. Participates actively in the response to hyperosmotic and heat shock by preventing the aggregation of stress-denatured proteins and by disaggregating proteins, also in an autonomous, DnaK-independent fashion. Unfolded proteins bind initially to DnaJ; upon interaction with the DnaJ-bound protein, DnaK hydrolyzes its bound ATP, resulting in the formation of a stable complex. GrpE releases ADP from DnaK; ATP binding to DnaK triggers the release of the substrate protein, thus completing the reaction cycle. Several rounds of ATP-dependent interactions between DnaJ, DnaK and GrpE are required for fully efficient folding. Also involved, together with DnaK and GrpE, in the DNA replication of plasmids through activation of initiation proteins. The protein is Chaperone protein DnaJ of Erysipelothrix rhusiopathiae.